Consider the following 492-residue polypeptide: GTPase Der (492 aa).

2 EngA-type G domains span residues 3 to 167 (FTLA…DAYA) and 201 to 381 (LQVA…EVWN). Residues 9-16 (GRPNVGKS), 56-60 (DTAGL), 119-122 (NKAE), 207-214 (GRPNAGKS), 259-263 (DTAGM), and 324-327 (NKWD) contribute to the GTP site. The KH-like domain occupies 382–468 (RRVTTAQLNR…RLWMRGQNDA (87 aa)). Residues 462 to 492 (MRGQNDANPYKGRKKAPPSKLRKHTDGRRKD) form a disordered region. Residues 472 to 492 (KGRKKAPPSKLRKHTDGRRKD) show a composition bias toward basic residues.

Belongs to the TRAFAC class TrmE-Era-EngA-EngB-Septin-like GTPase superfamily. EngA (Der) GTPase family. As to quaternary structure, associates with the 50S ribosomal subunit.

Its function is as follows. GTPase that plays an essential role in the late steps of ribosome biogenesis. The protein is GTPase Der of Roseobacter denitrificans (strain ATCC 33942 / OCh 114) (Erythrobacter sp. (strain OCh 114)).